The chain runs to 1018 residues: Integrator complex subunit 5 (1018 aa).

Residues 1-26 are disordered; it reads MSALCDPPGAPGPPGPAPATHGPAPL. Serine 2 is subject to N-acetylserine. Positions 8 to 17 are enriched in pro residues; sequence PGAPGPPGPA. Position 278 is a phosphoserine (serine 278). 3 helical membrane-spanning segments follow: residues 533–553, 855–875, and 929–949; these read LATQ…PLAF, LLFE…YCSV, and VFSQ…WGFL.

It belongs to the Integrator subunit 5 family. In terms of assembly, component of the Integrator complex, composed of core subunits INTS1, INTS2, INTS3, INTS4, INTS5, INTS6, INTS7, INTS8, INTS9/RC74, INTS10, INTS11/CPSF3L, INTS12, INTS13, INTS14 and INTS15. The core complex associates with protein phosphatase 2A subunits PPP2CA and PPP2R1A, to form the Integrator-PP2A (INTAC) complex.

It localises to the nucleus. It is found in the cytoplasm. The protein resides in the nucleus membrane. Its function is as follows. Component of the integrator complex, a multiprotein complex that terminates RNA polymerase II (Pol II) transcription in the promoter-proximal region of genes. The integrator complex provides a quality checkpoint during transcription elongation by driving premature transcription termination of transcripts that are unfavorably configured for transcriptional elongation: the complex terminates transcription by (1) catalyzing dephosphorylation of the C-terminal domain (CTD) of Pol II subunit POLR2A/RPB1 and SUPT5H/SPT5, (2) degrading the exiting nascent RNA transcript via endonuclease activity and (3) promoting the release of Pol II from bound DNA. The integrator complex is also involved in terminating the synthesis of non-coding Pol II transcripts, such as enhancer RNAs (eRNAs), small nuclear RNAs (snRNAs), telomerase RNAs and long non-coding RNAs (lncRNAs). Mediates recruitment of cytoplasmic dynein to the nuclear envelope, probably as component of the integrator complex. In Mus musculus (Mouse), this protein is Integrator complex subunit 5 (Ints5).